The following is a 350-amino-acid chain: RNA 3'-terminal phosphate cyclase (350 aa).

Residues Gln100 and 290–294 (FLGDQ) each bind ATP. The Tele-AMP-histidine intermediate role is filled by His314.

The protein belongs to the RNA 3'-terminal cyclase family. Type 1 subfamily.

It is found in the cytoplasm. The catalysed reaction is a 3'-end 3'-phospho-ribonucleotide-RNA + ATP = a 3'-end 2',3'-cyclophospho-ribonucleotide-RNA + AMP + diphosphate. Its function is as follows. Catalyzes the conversion of 3'-phosphate to a 2',3'-cyclic phosphodiester at the end of RNA. The mechanism of action of the enzyme occurs in 3 steps: (A) adenylation of the enzyme by ATP; (B) transfer of adenylate to an RNA-N3'P to produce RNA-N3'PP5'A; (C) and attack of the adjacent 2'-hydroxyl on the 3'-phosphorus in the diester linkage to produce the cyclic end product. The biological role of this enzyme is unknown but it is likely to function in some aspects of cellular RNA processing. This chain is RNA 3'-terminal phosphate cyclase, found in Thermococcus sibiricus (strain DSM 12597 / MM 739).